A 278-amino-acid chain; its full sequence is Shikimate dehydrogenase (NADP(+)) (278 aa).

Shikimate-binding positions include 15-17 and T62; that span reads SMS. Residue K66 is the Proton acceptor of the active site. NADP(+) is bound at residue E78. Residues N87 and D102 each coordinate shikimate. Residues 127-131, 151-156, and I217 each bind NADP(+); these read GAGGA and NRTPEK. Residue Y219 participates in shikimate binding. G240 provides a ligand contact to NADP(+).

This sequence belongs to the shikimate dehydrogenase family. As to quaternary structure, homodimer.

It carries out the reaction shikimate + NADP(+) = 3-dehydroshikimate + NADPH + H(+). Its pathway is metabolic intermediate biosynthesis; chorismate biosynthesis; chorismate from D-erythrose 4-phosphate and phosphoenolpyruvate: step 4/7. Functionally, involved in the biosynthesis of the chorismate, which leads to the biosynthesis of aromatic amino acids. Catalyzes the reversible NADPH linked reduction of 3-dehydroshikimate (DHSA) to yield shikimate (SA). In Bacillus licheniformis (strain ATCC 14580 / DSM 13 / JCM 2505 / CCUG 7422 / NBRC 12200 / NCIMB 9375 / NCTC 10341 / NRRL NRS-1264 / Gibson 46), this protein is Shikimate dehydrogenase (NADP(+)).